Reading from the N-terminus, the 425-residue chain is AP-3 complex subunit mu (425 aa).

In terms of domain architecture, MHD spans 175–423; sequence TNEFFIHVLE…TIIAQNVSFR (249 aa).

It belongs to the adaptor complexes medium subunit family.

The protein resides in the cytoplasm. It is found in the cytoskeleton. The protein localises to the microtubule organizing center. Its subcellular location is the spindle pole body. It localises to the membrane. The protein resides in the golgi apparatus. It is found in the cytoplasmic vesicle membrane. In terms of biological role, part of the AP-3 complex, an adaptor-related complex which is not clathrin-associated. The complex is associated with the Golgi region as well as more peripheral structures. It facilitates the budding of vesicles from the Golgi membrane and may be directly involved in trafficking to the vacuole. In Schizosaccharomyces pombe (strain 972 / ATCC 24843) (Fission yeast), this protein is AP-3 complex subunit mu (apm3).